Here is a 300-residue protein sequence, read N- to C-terminus: Protease HtpX homolog (300 aa).

The next 2 membrane-spanning stretches (helical) occupy residues 7 to 24 (GILMAVMTALFLGVGALI) and 29 to 46 (GAIIALVIAAGMNLFTFW). His-130 lines the Zn(2+) pocket. Glu-131 is a catalytic residue. His-134 is a binding site for Zn(2+). Helical transmembrane passes span 145–165 (VTATFAGAISMLANFAFFFGG) and 174–194 (PMGLVGTLALMFLAPLAAGLV). A Zn(2+)-binding site is contributed by Glu-203.

The protein belongs to the peptidase M48B family. Zn(2+) is required as a cofactor.

It localises to the cell inner membrane. In Cereibacter sphaeroides (strain ATCC 17029 / ATH 2.4.9) (Rhodobacter sphaeroides), this protein is Protease HtpX homolog.